Reading from the N-terminus, the 183-residue chain is Translation initiation factor IF-3 (183 aa).

Belongs to the IF-3 family. Monomer.

It is found in the cytoplasm. In terms of biological role, IF-3 binds to the 30S ribosomal subunit and shifts the equilibrium between 70S ribosomes and their 50S and 30S subunits in favor of the free subunits, thus enhancing the availability of 30S subunits on which protein synthesis initiation begins. In Azobacteroides pseudotrichonymphae genomovar. CFP2, this protein is Translation initiation factor IF-3.